The primary structure comprises 632 residues: 1-deoxy-D-xylulose-5-phosphate synthase (632 aa).

Thiamine diphosphate-binding positions include H79 and 120–122; that span reads GHA. D152 lines the Mg(2+) pocket. Thiamine diphosphate contacts are provided by residues 153–154, N181, F293, and E377; that span reads GA. N181 lines the Mg(2+) pocket.

The protein belongs to the transketolase family. DXPS subfamily. As to quaternary structure, homodimer. The cofactor is Mg(2+). Thiamine diphosphate serves as cofactor.

The catalysed reaction is D-glyceraldehyde 3-phosphate + pyruvate + H(+) = 1-deoxy-D-xylulose 5-phosphate + CO2. The protein operates within metabolic intermediate biosynthesis; 1-deoxy-D-xylulose 5-phosphate biosynthesis; 1-deoxy-D-xylulose 5-phosphate from D-glyceraldehyde 3-phosphate and pyruvate: step 1/1. Functionally, catalyzes the acyloin condensation reaction between C atoms 2 and 3 of pyruvate and glyceraldehyde 3-phosphate to yield 1-deoxy-D-xylulose-5-phosphate (DXP). The polypeptide is 1-deoxy-D-xylulose-5-phosphate synthase (Parabacteroides distasonis (strain ATCC 8503 / DSM 20701 / CIP 104284 / JCM 5825 / NCTC 11152)).